The chain runs to 140 residues: ATP synthase epsilon chain (140 aa).

The protein belongs to the ATPase epsilon chain family. F-type ATPases have 2 components, CF(1) - the catalytic core - and CF(0) - the membrane proton channel. CF(1) has five subunits: alpha(3), beta(3), gamma(1), delta(1), epsilon(1). CF(0) has three main subunits: a, b and c.

It localises to the cell inner membrane. Its function is as follows. Produces ATP from ADP in the presence of a proton gradient across the membrane. The sequence is that of ATP synthase epsilon chain from Xanthomonas oryzae pv. oryzae (strain MAFF 311018).